A 150-amino-acid chain; its full sequence is Triosephosphate isomerase (150 aa).

Positions 9 and 11 each coordinate substrate. His95 (electrophile) is an active-site residue.

It belongs to the triosephosphate isomerase family. Homodimer.

It is found in the cytoplasm. The enzyme catalyses D-glyceraldehyde 3-phosphate = dihydroxyacetone phosphate. Its pathway is carbohydrate biosynthesis; gluconeogenesis. The protein operates within carbohydrate degradation; glycolysis; D-glyceraldehyde 3-phosphate from glycerone phosphate: step 1/1. The chain is Triosephosphate isomerase (tpiA) from Mycoplasmoides pirum (Mycoplasma pirum).